The sequence spans 98 residues: NADH-ubiquinone oxidoreductase chain 4L (98 aa).

The next 3 helical transmembrane spans lie at 1–21 (MTMV…GLLM), 29–49 (SLLC…VTIL), and 61–81 (IILL…LVMV).

This sequence belongs to the complex I subunit 4L family. As to quaternary structure, core subunit of respiratory chain NADH dehydrogenase (Complex I) which is composed of 45 different subunits.

It is found in the mitochondrion inner membrane. The catalysed reaction is a ubiquinone + NADH + 5 H(+)(in) = a ubiquinol + NAD(+) + 4 H(+)(out). Its function is as follows. Core subunit of the mitochondrial membrane respiratory chain NADH dehydrogenase (Complex I) which catalyzes electron transfer from NADH through the respiratory chain, using ubiquinone as an electron acceptor. Part of the enzyme membrane arm which is embedded in the lipid bilayer and involved in proton translocation. This is NADH-ubiquinone oxidoreductase chain 4L (MT-ND4L) from Mirounga angustirostris (Northern elephant seal).